The chain runs to 270 residues: Ribosomal RNA small subunit methyltransferase J (270 aa).

S-adenosyl-L-methionine contacts are provided by residues 126-127 (ER) and D182.

It belongs to the methyltransferase superfamily. RsmJ family.

It is found in the cytoplasm. The catalysed reaction is guanosine(1516) in 16S rRNA + S-adenosyl-L-methionine = N(2)-methylguanosine(1516) in 16S rRNA + S-adenosyl-L-homocysteine + H(+). Functionally, specifically methylates the guanosine in position 1516 of 16S rRNA. This chain is Ribosomal RNA small subunit methyltransferase J, found in Acinetobacter baylyi (strain ATCC 33305 / BD413 / ADP1).